The chain runs to 412 residues: MKIMGKKARNAALVLAVVSAEQKKHALEMIALSLESQADEILCANNQDLINAAQNNMAAAMIDRLKLDELRLCAMIDSVRQIACLPDPVGQVINAWTRPNGLHISCVRTPLGVIGIIYESRPNVTIDASCLCLKSGNAAILRGGSDSFHSAYALHSALAMGLEKAGLPTDAIQMVETTDRDAVGEMLKGLDGTIDVIIPRGGQSLVKRVQSDARVPVFAHLAGLCHIYIDQSANVEMARDIVLNAKLRRTGICGAVETVLIDRQALEKFLPVLIALQEKGCEIRATEDIVSLVPTFALACEEDWSQEYLDAILSVKTVEGVEGAIEHIVRYSSGHTESIIAEDVGVVEIFFNRLDSAILLHNASTQFADGGEFGFGAEIGIATGKMHARGPIGVEQLTSFQYQIRGNGQVRP.

This sequence belongs to the gamma-glutamyl phosphate reductase family.

It is found in the cytoplasm. The enzyme catalyses L-glutamate 5-semialdehyde + phosphate + NADP(+) = L-glutamyl 5-phosphate + NADPH + H(+). The protein operates within amino-acid biosynthesis; L-proline biosynthesis; L-glutamate 5-semialdehyde from L-glutamate: step 2/2. Functionally, catalyzes the NADPH-dependent reduction of L-glutamate 5-phosphate into L-glutamate 5-semialdehyde and phosphate. The product spontaneously undergoes cyclization to form 1-pyrroline-5-carboxylate. In Bartonella bacilliformis (strain ATCC 35685 / KC583 / Herrer 020/F12,63), this protein is Gamma-glutamyl phosphate reductase.